A 770-amino-acid polypeptide reads, in one-letter code: Endothelin-converting enzyme 1 (770 aa).

Topologically, residues 1–68 (MRGVWPPPVS…WAARTQVEKR (68 aa)) are cytoplasmic. Threonine 25 is subject to Phosphothreonine. A helical; Signal-anchor for type II membrane protein transmembrane segment spans residues 69 to 89 (LVVLVVLLAAGLVACLAALGI). The Extracellular segment spans residues 90-770 (QYQTRSPSVC…MNPPHKCEVW (681 aa)). In terms of domain architecture, Peptidase M13 spans 98 to 770 (VCLSEACVSV…MNPPHKCEVW (673 aa)). Cystine bridges form between cysteine 99–cysteine 104, cysteine 122–cysteine 755, cysteine 130–cysteine 715, cysteine 185–cysteine 435, and cysteine 644–cysteine 767. Asparagine 166, asparagine 187, asparagine 210, asparagine 270, asparagine 316, asparagine 362, asparagine 383, and asparagine 539 each carry an N-linked (GlcNAc...) asparagine glycan. A Zn(2+)-binding site is contributed by histidine 607. Residue glutamate 608 is part of the active site. Histidine 611 contributes to the Zn(2+) binding site. 2 N-linked (GlcNAc...) asparagine glycosylation sites follow: asparagine 632 and asparagine 651. Glutamate 667 is a Zn(2+) binding site. The active-site Proton donor is the aspartate 671.

Belongs to the peptidase M13 family. In terms of assembly, homodimer; disulfide-linked. Interacts with PPP1R16B. Interacts with TSPAN8; this interaction recruits the endothelin converting enzyme ECE1 to tetraspanin-enriched microdomains and positively modulates its enzymatic activity. Requires Zn(2+) as cofactor. As to expression, all isoforms are expressed in umbilical vein endothelial cells, polynuclear neutrophils, fibroblasts, atrium cardiomyocytes and ventricles. Isoforms A, B and C are also expressed in placenta, lung, heart, adrenal gland and phaeochromocytoma; isoforms A and C in liver, testis and small intestine; isoform B, C and D in endothelial cells and umbilical vein smooth muscle cells; isoforms C and D in saphenous vein cells, and isoform C in kidney.

It is found in the cell membrane. The enzyme catalyses Hydrolysis of the 21-Trp-|-Val-22 bond in big endothelin to form endothelin 1.. Its activity is regulated as follows. Inhibited by phosphoramidon. Activated by K49-P1-20, a twenty-residue synthetic peptide shortened from the snake B.asper myotoxin II. Its function is as follows. Converts big endothelin-1 to endothelin-1. The protein is Endothelin-converting enzyme 1 (ECE1) of Homo sapiens (Human).